Reading from the N-terminus, the 442-residue chain is Exodeoxyribonuclease 7 large subunit (442 aa).

It belongs to the XseA family. In terms of assembly, heterooligomer composed of large and small subunits.

The protein localises to the cytoplasm. It catalyses the reaction Exonucleolytic cleavage in either 5'- to 3'- or 3'- to 5'-direction to yield nucleoside 5'-phosphates.. Bidirectionally degrades single-stranded DNA into large acid-insoluble oligonucleotides, which are then degraded further into small acid-soluble oligonucleotides. This is Exodeoxyribonuclease 7 large subunit from Shewanella sediminis (strain HAW-EB3).